The sequence spans 271 residues: Putative phosphoenolpyruvate synthase regulatory protein (271 aa).

Position 151–158 (151–158) interacts with ADP; sequence GVSRSGKT.

The protein belongs to the pyruvate, phosphate/water dikinase regulatory protein family. PSRP subfamily.

The catalysed reaction is [pyruvate, water dikinase] + ADP = [pyruvate, water dikinase]-phosphate + AMP + H(+). It carries out the reaction [pyruvate, water dikinase]-phosphate + phosphate + H(+) = [pyruvate, water dikinase] + diphosphate. Its function is as follows. Bifunctional serine/threonine kinase and phosphorylase involved in the regulation of the phosphoenolpyruvate synthase (PEPS) by catalyzing its phosphorylation/dephosphorylation. The sequence is that of Putative phosphoenolpyruvate synthase regulatory protein from Burkholderia multivorans (strain ATCC 17616 / 249).